Reading from the N-terminus, the 363-residue chain is Dual-specificity RNA methyltransferase RlmN (363 aa).

Glu-102 functions as the Proton acceptor in the catalytic mechanism. In terms of domain architecture, Radical SAM core spans 108–344 (EKKRSTLCVS…TTTIRKNRGE (237 aa)). Cysteines 115 and 350 form a disulfide. The [4Fe-4S] cluster site is built by Cys-122, Cys-126, and Cys-129. Residues 174 to 175 (GE), Ser-206, 228 to 230 (SLH), and Asn-307 contribute to the S-adenosyl-L-methionine site. The active-site S-methylcysteine intermediate is Cys-350.

The protein belongs to the radical SAM superfamily. RlmN family. [4Fe-4S] cluster is required as a cofactor.

The protein localises to the cytoplasm. The enzyme catalyses adenosine(2503) in 23S rRNA + 2 reduced [2Fe-2S]-[ferredoxin] + 2 S-adenosyl-L-methionine = 2-methyladenosine(2503) in 23S rRNA + 5'-deoxyadenosine + L-methionine + 2 oxidized [2Fe-2S]-[ferredoxin] + S-adenosyl-L-homocysteine. It catalyses the reaction adenosine(37) in tRNA + 2 reduced [2Fe-2S]-[ferredoxin] + 2 S-adenosyl-L-methionine = 2-methyladenosine(37) in tRNA + 5'-deoxyadenosine + L-methionine + 2 oxidized [2Fe-2S]-[ferredoxin] + S-adenosyl-L-homocysteine. Functionally, specifically methylates position 2 of adenine 2503 in 23S rRNA and position 2 of adenine 37 in tRNAs. m2A2503 modification seems to play a crucial role in the proofreading step occurring at the peptidyl transferase center and thus would serve to optimize ribosomal fidelity. In Buchnera aphidicola subsp. Acyrthosiphon pisum (strain APS) (Acyrthosiphon pisum symbiotic bacterium), this protein is Dual-specificity RNA methyltransferase RlmN.